The chain runs to 506 residues: ATP synthase subunit alpha, chloroplastic (506 aa).

170–177 provides a ligand contact to ATP; the sequence is GDRQTGKT.

Belongs to the ATPase alpha/beta chains family. In terms of assembly, F-type ATPases have 2 components, CF(1) - the catalytic core - and CF(0) - the membrane proton channel. CF(1) has five subunits: alpha(3), beta(3), gamma(1), delta(1), epsilon(1). CF(0) has four main subunits: a, b, b' and c.

The protein localises to the plastid. The protein resides in the chloroplast thylakoid membrane. It catalyses the reaction ATP + H2O + 4 H(+)(in) = ADP + phosphate + 5 H(+)(out). Its function is as follows. Produces ATP from ADP in the presence of a proton gradient across the membrane. The alpha chain is a regulatory subunit. This chain is ATP synthase subunit alpha, chloroplastic, found in Chlorokybus atmophyticus (Soil alga).